A 486-amino-acid chain; its full sequence is Kynurenine 3-monooxygenase (486 aa).

2 consecutive transmembrane segments (helical) span residues 401 to 424 (LLFW…HMRY) and 437 to 459 (ILTR…LCYR).

The protein belongs to the aromatic-ring hydroxylase family. KMO subfamily. The cofactor is FAD.

The protein localises to the mitochondrion. The protein resides in the membrane. The catalysed reaction is L-kynurenine + NADPH + O2 + H(+) = 3-hydroxy-L-kynurenine + NADP(+) + H2O. Its pathway is cofactor biosynthesis; NAD(+) biosynthesis; quinolinate from L-kynurenine: step 1/3. In terms of biological role, catalyzes the hydroxylation of L-kynurenine (L-Kyn) to form 3-hydroxy-L-kynurenine (L-3OHKyn). Required for synthesis of quinolinic acid. The sequence is that of Kynurenine 3-monooxygenase (kh) from Anopheles gambiae (African malaria mosquito).